A 585-amino-acid polypeptide reads, in one-letter code: ATP-dependent lipid A-core flippase (585 aa).

6 helical membrane passes run 18 to 38 (LWPTIAPFKIGLIAAAAALVL), 68 to 88 (LMAVLVIVFIFIRGITSFISS), 142 to 162 (SNALVTIVREGAYIISLLAVM), 163 to 183 (IATSWQLSVVLFIIGPVIAVL), 255 to 275 (PIVQIIASLALSAVLYLATIP), and 277 to 297 (IMSQNLSAGSFTVVFSSMLAM). The ABC transmembrane type-1 domain maps to 30–313 (IAAAAALVLN…LTNVNSQFQR (284 aa)). The region spanning 345–581 (VSFKDVSFTY…NGAYKQLHKM (237 aa)) is the ABC transporter domain. An ATP-binding site is contributed by 379–386 (GRSGSGKS).

It belongs to the ABC transporter superfamily. Lipid exporter (TC 3.A.1.106) family. As to quaternary structure, homodimer.

It is found in the cell inner membrane. The enzyme catalyses ATP + H2O + lipid A-core oligosaccharideSide 1 = ADP + phosphate + lipid A-core oligosaccharideSide 2.. Involved in lipopolysaccharide (LPS) biosynthesis. Translocates lipid A-core from the inner to the outer leaflet of the inner membrane. Transmembrane domains (TMD) form a pore in the inner membrane and the ATP-binding domain (NBD) is responsible for energy generation. This chain is ATP-dependent lipid A-core flippase, found in Mannheimia succiniciproducens (strain KCTC 0769BP / MBEL55E).